We begin with the raw amino-acid sequence, 280 residues long: Golgi phosphoprotein 3-like B (280 aa).

A disordered region spans residues 1-32 (MTTLIRRGRRAEEGQERRADSEDSIKDKDEED). The span at 10 to 32 (RAEEGQERRADSEDSIKDKDEED) shows a compositional bias: basic and acidic residues. A 1,2-diacyl-sn-glycero-3-phospho-(1D-myo-inositol 4-phosphate) is bound by residues Trp62, Arg71, Arg152, and Arg155. Residues 171-182 (EKQNFLLFDMTT) are beta-hairpin required for oligomerization.

Belongs to the GOLPH3/VPS74 family. In terms of assembly, homooligomer.

It localises to the golgi apparatus. The protein localises to the golgi stack membrane. The protein resides in the trans-Golgi network membrane. In terms of biological role, phosphatidylinositol-4-phosphate-binding protein that may play a role in the process of vesicle budding at the Golgi and anterograde transport to the plasma membrane. The chain is Golgi phosphoprotein 3-like B (golph3l-b) from Xenopus laevis (African clawed frog).